The chain runs to 100 residues: Urease subunit gamma (100 aa).

This sequence belongs to the urease gamma subunit family. Heterotrimer of UreA (gamma), UreB (beta) and UreC (alpha) subunits. Three heterotrimers associate to form the active enzyme.

The protein localises to the cytoplasm. It catalyses the reaction urea + 2 H2O + H(+) = hydrogencarbonate + 2 NH4(+). It participates in nitrogen metabolism; urea degradation; CO(2) and NH(3) from urea (urease route): step 1/1. In Prochlorococcus marinus (strain NATL2A), this protein is Urease subunit gamma.